Consider the following 336-residue polypeptide: Flagellar filament 41 kDa core protein (336 aa).

Residues 208–236 (AAPVQEGVQQEGAQQPAPATAPSQGGVNS) form a disordered region. Positions 210–233 (PVQEGVQQEGAQQPAPATAPSQGG) are enriched in low complexity.

This sequence belongs to the bacterial flagellin family. In terms of assembly, the flagellum consists of an outer layer composed of repeating units of FlaA around a core that contains several antigenically related polypeptides.

Its subcellular location is the periplasmic flagellum. It localises to the periplasm. Functionally, component of the core of the flagella. This chain is Flagellar filament 41 kDa core protein (fla), found in Borreliella burgdorferi (strain ATCC 35210 / DSM 4680 / CIP 102532 / B31) (Borrelia burgdorferi).